The chain runs to 137 residues: Small ribosomal subunit protein uS9 (137 aa).

Belongs to the universal ribosomal protein uS9 family.

The sequence is that of Small ribosomal subunit protein uS9 (rps9) from Sulfurisphaera tokodaii (strain DSM 16993 / JCM 10545 / NBRC 100140 / 7) (Sulfolobus tokodaii).